The following is a 635-amino-acid chain: Threonine--tRNA ligase (635 aa).

The TGS domain maps to 1–61 (MVSIRLPDGS…DRDASLAIVT (61 aa)). The interval 242-533 (DHRKLGKQLD…LIEHHAGAMP (292 aa)) is catalytic. Zn(2+) contacts are provided by cysteine 333, histidine 384, and histidine 510.

It belongs to the class-II aminoacyl-tRNA synthetase family. In terms of assembly, homodimer. Requires Zn(2+) as cofactor.

It localises to the cytoplasm. It catalyses the reaction tRNA(Thr) + L-threonine + ATP = L-threonyl-tRNA(Thr) + AMP + diphosphate + H(+). Functionally, catalyzes the attachment of threonine to tRNA(Thr) in a two-step reaction: L-threonine is first activated by ATP to form Thr-AMP and then transferred to the acceptor end of tRNA(Thr). Also edits incorrectly charged L-seryl-tRNA(Thr). The chain is Threonine--tRNA ligase from Burkholderia vietnamiensis (strain G4 / LMG 22486) (Burkholderia cepacia (strain R1808)).